The chain runs to 116 residues: U11-theraphotoxin-Hhn1b (116 aa).

Residues methionine 1–alanine 21 form the signal peptide. Positions aspartate 22 to arginine 74 are excised as a propeptide. Residues glutamate 61–aspartate 83 form a disordered region. Disulfide bonds link cysteine 75–cysteine 90, cysteine 82–cysteine 95, and cysteine 89–cysteine 110.

It belongs to the neurotoxin 14 (magi-1) family. 01 (HNTX-16) subfamily. As to expression, expressed by the venom gland.

It localises to the secreted. Probable ion channel inhibitor. The chain is U11-theraphotoxin-Hhn1b from Cyriopagopus hainanus (Chinese bird spider).